The sequence spans 122 residues: SLMQFETLIMKIAGRSGIWYYGSYGCYCGAGGQGRPQDASDRCCFVHDCCYGKVTGCDPKLDVYTYTEENGAIVCGGDDPCKKQICECDKDAAICFRDNIDTYDNKYWFFPAKNCQEESEPC.

Disulfide bonds link Cys26-Cys115, Cys28-Cys44, Cys43-Cys95, Cys49-Cys122, Cys50-Cys88, Cys57-Cys81, and Cys75-Cys86. Ca(2+) is bound by residues Tyr27, Gly29, and Gly31. Residue His47 is part of the active site. A Ca(2+)-binding site is contributed by Asp48. Asp89 is a catalytic residue.

This sequence belongs to the phospholipase A2 family. Group II subfamily. D49 sub-subfamily. Monomer. Ca(2+) serves as cofactor. In terms of tissue distribution, expressed by the venom gland.

It localises to the secreted. It carries out the reaction a 1,2-diacyl-sn-glycero-3-phosphocholine + H2O = a 1-acyl-sn-glycero-3-phosphocholine + a fatty acid + H(+). In terms of biological role, PLA2 catalyzes the calcium-dependent hydrolysis of the 2-acyl groups in 3-sn-phosphoglycerides. This Gloydius blomhoffii (Mamushi) protein is Acidic phospholipase A2.